The sequence spans 764 residues: FAST kinase domain-containing protein 5, mitochondrial (764 aa).

S95 is modified (phosphoserine). At K507 the chain carries N6-acetyllysine. The RAP domain maps to 697 to 757 (LAIQFTNRNQ…RLEKLAFLHE (61 aa)).

This sequence belongs to the FAST kinase family. As to quaternary structure, found in a complex with GRSF1, DDX28, DHX30 and FASTKD2. Associates with the 12S mitochondrial rRNA (12S mt-rRNA).

It localises to the mitochondrion matrix. The protein resides in the mitochondrion nucleoid. Functionally, plays an important role in the processing of non-canonical mitochondrial mRNA precursors. The sequence is that of FAST kinase domain-containing protein 5, mitochondrial (FASTKD5) from Macaca fascicularis (Crab-eating macaque).